A 233-amino-acid polypeptide reads, in one-letter code: Large ribosomal subunit protein eL6x (233 aa).

Positions His-48–Lys-72 are enriched in basic and acidic residues. Residues His-48–Ala-80 form a disordered region.

This sequence belongs to the eukaryotic ribosomal protein eL6 family.

The polypeptide is Large ribosomal subunit protein eL6x (RPL6C) (Arabidopsis thaliana (Mouse-ear cress)).